The following is a 31-amino-acid chain: Photosystem I reaction center subunit XII (31 aa).

A helical transmembrane segment spans residues 7–26; sequence QISIILLIALIPAFFSLKLG.

It belongs to the PsaM family.

The protein localises to the plastid. Its subcellular location is the chloroplast thylakoid membrane. The protein is Photosystem I reaction center subunit XII of Euglena myxocylindracea.